The sequence spans 104 residues: uncharacterized protein (104 aa).

This is an uncharacterized protein from Escherichia coli (Bacteriophage T4).